Here is a 240-residue protein sequence, read N- to C-terminus: Spore coat polysaccharide biosynthesis protein SpsF (240 aa).

This sequence belongs to the CMP-NeuNAc synthase family.

The protein operates within spore coat biogenesis; spore coat polysaccharide biosynthesis. This chain is Spore coat polysaccharide biosynthesis protein SpsF (spsF), found in Bacillus subtilis (strain 168).